The sequence spans 104 residues: L-rhamnose mutarotase (104 aa).

A substrate-binding site is contributed by tyrosine 18. Histidine 22 (proton donor) is an active-site residue. Substrate-binding positions include tyrosine 41 and 76-77 (WW).

Belongs to the rhamnose mutarotase family. In terms of assembly, homodimer.

The protein resides in the cytoplasm. It carries out the reaction alpha-L-rhamnose = beta-L-rhamnose. Its pathway is carbohydrate metabolism; L-rhamnose metabolism. Functionally, involved in the anomeric conversion of L-rhamnose. This Citrobacter koseri (strain ATCC BAA-895 / CDC 4225-83 / SGSC4696) protein is L-rhamnose mutarotase.